The sequence spans 529 residues: GMP synthase [glutamine-hydrolyzing] (529 aa).

Positions Arg9–Leu211 constitute a Glutamine amidotransferase type-1 domain. The active-site Nucleophile is the Cys86. Active-site residues include His185 and Glu187. Residues Trp212–Arg404 enclose the GMPS ATP-PPase domain. Ser239–Ser245 serves as a coordination point for ATP.

In terms of assembly, homodimer.

The enzyme catalyses XMP + L-glutamine + ATP + H2O = GMP + L-glutamate + AMP + diphosphate + 2 H(+). The protein operates within purine metabolism; GMP biosynthesis; GMP from XMP (L-Gln route): step 1/1. Catalyzes the synthesis of GMP from XMP. The polypeptide is GMP synthase [glutamine-hydrolyzing] (Aeromonas hydrophila subsp. hydrophila (strain ATCC 7966 / DSM 30187 / BCRC 13018 / CCUG 14551 / JCM 1027 / KCTC 2358 / NCIMB 9240 / NCTC 8049)).